The sequence spans 183 residues: Beta-defensin 129 (183 aa).

A signal peptide spans 1 to 19 (MKLLFPIFASLMLQYQVNT). 3 disulfide bridges follow: C27–C53, C34–C48, and C38–C54. The segment at 142-183 (ATSAKSNTKESGDSATASPPPAPPPPNILPTPSLELEEAEEQ) is disordered. Pro residues predominate over residues 159–170 (SPPPAPPPPNIL).

Belongs to the beta-defensin family.

It localises to the secreted. In terms of biological role, has antibacterial activity. The sequence is that of Beta-defensin 129 (DEFB129) from Macaca fascicularis (Crab-eating macaque).